The primary structure comprises 127 residues: Large ribosomal subunit protein bL20 (127 aa).

This sequence belongs to the bacterial ribosomal protein bL20 family.

Its function is as follows. Binds directly to 23S ribosomal RNA and is necessary for the in vitro assembly process of the 50S ribosomal subunit. It is not involved in the protein synthesizing functions of that subunit. The chain is Large ribosomal subunit protein bL20 (rplT) from Mycoplasma pneumoniae (strain ATCC 29342 / M129 / Subtype 1) (Mycoplasmoides pneumoniae).